A 269-amino-acid polypeptide reads, in one-letter code: Glutamate racemase (269 aa).

Substrate-binding positions include 11–12 (DS) and 43–44 (YG). The active-site Proton donor/acceptor is the cysteine 74. 75-76 (NT) provides a ligand contact to substrate. Cysteine 185 serves as the catalytic Proton donor/acceptor. A substrate-binding site is contributed by 186 to 187 (TH).

Belongs to the aspartate/glutamate racemases family.

It catalyses the reaction L-glutamate = D-glutamate. It functions in the pathway cell wall biogenesis; peptidoglycan biosynthesis. In terms of biological role, provides the (R)-glutamate required for cell wall biosynthesis. The polypeptide is Glutamate racemase (Bacillus cereus (strain ATCC 10987 / NRS 248)).